Here is a 235-residue protein sequence, read N- to C-terminus: Small ribosomal subunit protein uS2c (235 aa).

This sequence belongs to the universal ribosomal protein uS2 family.

Its subcellular location is the plastid. The protein localises to the chloroplast. The sequence is that of Small ribosomal subunit protein uS2c (rps2) from Cryptomeria japonica (Japanese cedar).